Consider the following 460-residue polypeptide: GTPase Der (460 aa).

2 consecutive EngA-type G domains span residues 21–187 (PRVV…FSVD) and 198–373 (VRLA…AQLN). Residues 27–34 (GRPNVGKS), 74–78 (DTSGF), 141–144 (NKTE), 204–211 (GKPNTGKS), 251–255 (DTAGI), and 316–319 (NKWD) contribute to the GTP site. Positions 374–457 (TKVETSALNT…PVKLTIRKNC (84 aa)) constitute a KH-like domain.

It belongs to the TRAFAC class TrmE-Era-EngA-EngB-Septin-like GTPase superfamily. EngA (Der) GTPase family. Associates with the 50S ribosomal subunit.

Functionally, GTPase that plays an essential role in the late steps of ribosome biogenesis. The polypeptide is GTPase Der (Treponema pallidum subsp. pallidum (strain SS14)).